The sequence spans 467 residues: Cysteine--tRNA ligase (467 aa).

Residue Cys30 participates in Zn(2+) binding. A 'HIGH' region motif is present at residues 32 to 42 (PTVYNYIHIGN). Cys210, His235, and Glu239 together coordinate Zn(2+). The 'KMSKS' region signature appears at 267–271 (KMSKS). Lys270 serves as a coordination point for ATP. A Phosphoserine modification is found at Ser271.

This sequence belongs to the class-I aminoacyl-tRNA synthetase family. As to quaternary structure, monomer. Zn(2+) serves as cofactor.

The protein resides in the cytoplasm. It catalyses the reaction tRNA(Cys) + L-cysteine + ATP = L-cysteinyl-tRNA(Cys) + AMP + diphosphate. In Geobacillus thermodenitrificans (strain NG80-2), this protein is Cysteine--tRNA ligase.